The following is a 387-amino-acid chain: EARP-interacting protein homolog (387 aa).

5 WD repeats span residues 132 to 172, 182 to 222, 226 to 266, 270 to 310, and 345 to 385; these read TAHG…SKAV, KGQL…QIYC, AHGQ…DPVK, EHSH…SEPF, and EHED…KYHI.

The protein belongs to the WD repeat EIPR1 family.

The polypeptide is EARP-interacting protein homolog (Gekko japonicus (Schlegel's Japanese gecko)).